A 118-amino-acid polypeptide reads, in one-letter code: Large ribosomal subunit protein uL22c (118 aa).

It belongs to the universal ribosomal protein uL22 family. Part of the 50S ribosomal subunit.

It is found in the plastid. Its subcellular location is the chloroplast. This protein binds specifically to 23S rRNA. In terms of biological role, the globular domain of the protein is located near the polypeptide exit tunnel on the outside of the subunit, while an extended beta-hairpin is found that lines the wall of the exit tunnel in the center of the 70S ribosome. This chain is Large ribosomal subunit protein uL22c (rpl22), found in Rhodomonas salina (Cryptomonas salina).